The following is a 574-amino-acid chain: Sorting nexin-33 (574 aa).

Residues 1–61 enclose the SH3 domain; that stretch reads MALKGRALYD…PASYVEIVRP (61 aa). Ser-77 is subject to Phosphoserine. Positions 79–90 are enriched in polar residues; that stretch reads GTQGSLYSSPSM. Positions 79–116 are disordered; that stretch reads GTQGSLYSSPSMASPARSGGGSGFLSNPGSFEDDDDDD. Ser-92 is modified (phosphoserine). Residues 230-340 enclose the PX domain; that stretch reads FACSIEDPTK…HFLSCLDDKQ (111 aa). Residues 371-574 form the BAR domain; it reads LQDVEDRVDT…EKTLHMYDHL (204 aa).

Belongs to the sorting nexin family. As to quaternary structure, homodimer (via BAR domain). Interacts with ADAM15. Interacts with FASLG. Interacts (via SH3 domain) with DNM1 and DNM2. Interacts with WASL. Interacts with FCHSD1 (via the F-BAR domain). Post-translationally, phosphorylated. In terms of tissue distribution, detected in brain (at protein level).

It is found in the cytoplasm. The protein localises to the cytosol. It localises to the membrane. The protein resides in the cytoplasmic vesicle membrane. Plays a role in the reorganization of the cytoskeleton, endocytosis and cellular vesicle trafficking via its interactions with membranes, WASL, DNM1 and DNM2. Acts both during interphase and at the end of mitotic cell divisions. Required for efficient progress through mitosis and cytokinesis. Required for normal formation of the cleavage furrow at the end of mitosis. Modulates endocytosis of cell-surface proteins, such as APP and PRNP; this then modulates the secretion of APP and PRNP peptides. Promotes membrane tubulation (in vitro). May promote the formation of macropinosomes. This chain is Sorting nexin-33 (Snx33), found in Mus musculus (Mouse).